We begin with the raw amino-acid sequence, 511 residues long: MEAEKMELKLYNTMTQQKEVLIPITPGKIGLYVCGITAYDFSHIGHARAAVSFDVLYRYLKHLDYDVTFVRNFTDVDDKIIDRANKNGEDPLDLSNRFCDEYLVDMGALQCLPPTHQPRVSEHMDNIIKMIEKIIEKDCGYVVEGDVFFSVDKSPNYGKLSGQLLEHTRAGERVAVDSRKRNPADFALWKAAKPDEPSWESPWGPGRPGWHIECSAMSVHYLSPKFDIHGGGADLKFPHHENEIAQTCAACEDSGVNYWLHNGHVTINNEKMAKSKHNFKTIREITASYHPLALRHFLMSAQYRSPLSFTASQLESSSEALYYVYQTLQDLDEGLSPYQDALSEDGGKSEQTAEGKDIIKKLKTEFESKMLDDLNTAHILTGAYQDALKFINASLSKLKKMQKKQRMSMLVSLVEIEKAAREVLDVLGLLTTLSYAEILKEMKLKTLIRAEIGEEGISQLIEERITARKNKDFAKSDEIREKLTRKGIALMDIGKETVWRPCFPSQADSST.

Cysteine 34 is a Zn(2+) binding site. A 'HIGH' region motif is present at residues 36–46 (ITAYDFSHIGH). 3 residues coordinate Zn(2+): cysteine 214, histidine 239, and glutamate 243. Residues 271–275 (KMAKS) carry the 'KMSKS' region motif. Lysine 274 serves as a coordination point for ATP. 2 TPR repeats span residues 315–348 (ESSSEALYYVYQTLQDLDEGLSPYQDALSEDGGK) and 368–401 (SKMLDDLNTAHILTGAYQDALKFINASLSKLKKM).

This sequence belongs to the class-I aminoacyl-tRNA synthetase family. Zn(2+) serves as cofactor.

It is found in the cytoplasm. The protein resides in the cytosol. It carries out the reaction tRNA(Cys) + L-cysteine + ATP = L-cysteinyl-tRNA(Cys) + AMP + diphosphate. In Arabidopsis thaliana (Mouse-ear cress), this protein is Cysteine--tRNA ligase 2, cytoplasmic.